The primary structure comprises 66 residues: Beta-toxin Cbo4 (66 aa).

In terms of domain architecture, LCN-type CS-alpha/beta spans 1–66 (KEGYIVDYHT…VWPLPNKRCK (66 aa)). Cystine bridges form between Cys-12–Cys-65, Cys-16–Cys-41, Cys-25–Cys-46, and Cys-29–Cys-48. Residue Lys-66 is modified to Lysine amide.

It belongs to the long (4 C-C) scorpion toxin superfamily. Sodium channel inhibitor family. Beta subfamily. As to expression, expressed by the venom gland.

The protein resides in the secreted. Its function is as follows. Beta toxins bind voltage-independently at site-4 of sodium channels and shift the voltage of activation toward more negative potentials thereby affecting sodium channel activation and promoting spontaneous and repetitive firing. Is active on the human voltage-gated sodium channels Nav1.4/SCN4A, Nav1.5/SCN5A and Nav1.6/SCN8A when tested at 200 nM. In vivo, is toxic to mice when intraperitoneally injected. The protein is Beta-toxin Cbo4 of Centruroides bonito (Scorpion).